The following is a 122-amino-acid chain: HetP-like commitment protein Alr3234 (122 aa).

Belongs to the HetP family. In terms of assembly, in bacterial two-hybrid assays interacts robustly with itself, Asl1930, Alr2902 and HetR and weakly with HetP.

Delays heterocyst differentiation and commitment when nitrogen is limiting. Interplay between the 4 HetP paralogs controls the timing of commitment to heterocyst formation and its duration. Epistatic analysis show that the 3 paralogs act upstream of hetP to delay commitment (asl1930, alr3234) or inhibit development (alr2902). Asl1930 and Alr3234 must also attenuate the activity of Alr2902. Ectopic expression does not complement a hetP deletion. This chain is HetP-like commitment protein Alr3234, found in Nostoc sp. (strain PCC 7120 / SAG 25.82 / UTEX 2576).